We begin with the raw amino-acid sequence, 317 residues long: Dehydrogenase/reductase SDR family protein 7-like (317 aa).

The Cytoplasmic portion of the chain corresponds to 1-10; that stretch reads MKNLAERSAG. Residues 11-31 traverse the membrane as a helical; Signal-anchor for type II membrane protein segment; it reads SLYWWLLATLFLPIAIPGLVL. The Peroxisomal portion of the chain corresponds to 32–317; the sequence is KLLTMMKEQR…KKRAEKLNST (286 aa). An NAD(+)-binding site is contributed by 52 to 76; sequence LITGASSGLGEALAHSFFLAGCKVV. Residue serine 189 coordinates substrate. Tyrosine 202 functions as the Proton acceptor in the catalytic mechanism.

It belongs to the short-chain dehydrogenases/reductases (SDR) family.

It is found in the peroxisome membrane. In terms of biological role, putative oxidoreductase. The protein is Dehydrogenase/reductase SDR family protein 7-like of Anopheles gambiae (African malaria mosquito).